We begin with the raw amino-acid sequence, 419 residues long: Heparan-sulfate 6-O-sulfotransferase 3-B (419 aa).

The Cytoplasmic segment spans residues 1–7; it reads MNDKPNK. A helical; Signal-anchor for type II membrane protein transmembrane segment spans residues 8 to 28; that stretch reads WIFIPILAILFVMIGYQYVCP. The Lumenal segment spans residues 29–419; that stretch reads AGGQACHFRT…EDYASQVVRW (391 aa). Residue N77 is glycosylated (N-linked (GlcNAc...) asparagine). 3'-phosphoadenylyl sulfate is bound at residue 101 to 109; it reads HIQKTGGTT. Substrate contacts are provided by residues 131–132, R148, W153, and H158; that span reads KK. Catalysis depends on H158, which acts as the Proton acceptor. Residues R191 and S199 each contribute to the 3'-phosphoadenylyl sulfate site. 2 residues coordinate substrate: H203 and W210. 2 N-linked (GlcNAc...) asparagine glycosylation sites follow: N270 and N275. 323–325 lines the 3'-phosphoadenylyl sulfate pocket; the sequence is TQI. The N-linked (GlcNAc...) asparagine glycan is linked to N326. A 3'-phosphoadenylyl sulfate-binding site is contributed by 329–330; the sequence is RA. N393 and N402 each carry an N-linked (GlcNAc...) asparagine glycan.

It belongs to the sulfotransferase 6 family. As to expression, in early somitogenesis, expressed in presumptive forebrain and midbrain, tail bud and Kupffer's vesicle. During mid-somitogenesis, ubiquitous expression which is strongest in the somites and eye. During late somitogenesis, predominantly expressed in eye, hindbrain and ventral somites. At 24 hours post-fertilization (hpf), restricted to lens and neural retina, brain, otic vesicle and somites. At 36 hpf, brain expression is restricted to telencephalon. At 48 hpf, restricted to telencephalon and pectoral fin.

Its subcellular location is the membrane. The catalysed reaction is alpha-D-glucosaminyl-[heparan sulfate](n) + 3'-phosphoadenylyl sulfate = 6-sulfo-alpha-D-glucosaminyl-[heparan sulfate](n) + adenosine 3',5'-bisphosphate + H(+). Functionally, 6-O-sulfation enzyme which catalyzes the transfer of sulfate from 3'-phosphoadenosine 5'-phosphosulfate (PAPS) to position 6 of the N-sulfoglucosamine residue (GlcNS) of heparan sulfate. This chain is Heparan-sulfate 6-O-sulfotransferase 3-B, found in Danio rerio (Zebrafish).